Consider the following 329-residue polypeptide: Deoxynucleotidyltransferase terminal-interacting protein 1 (329 aa).

Disordered stretches follow at residues 1-22 and 147-178; these read MGAT…GGLE and KRGR…ILSS. Positions 56–147 are important for dimerization; the sequence is MTTSFTDPAI…RLTHELPGIK (92 aa). A compositionally biased stretch (basic and acidic residues) spans 147 to 158; that stretch reads KRGRQAEEECAH. The a.T hook DNA-binding region spans 159 to 173; sequence RGSPLPKKRKGRPPG. Serine 161 carries the phosphoserine modification. The short motif at 164 to 170 is the Nuclear localization signal element; sequence PKKRKGR. Residues 197 to 316 form an important for DNA and nucleosome binding region; that stretch reads REGPKWDPAR…MRKYMETLRT (120 aa). The segment at residues 216–237 is a DNA-binding region (H-T-H motif); sequence GSRANKALGMGGTRGRIYIKHP.

Monomer and homodimer. A minor proportion may form homotrimers. Interacts with ZNF541. Interacts with the terminal deoxynucleotidyltransferase DNTT. Interacts with TRERF1. Identified in a histone deacetylase complex that contains DNTTIP1, HDAC1 and MIDEAS; this complex assembles into a tetramer that contains four copies of each protein chain. Component of a histone deacetylase complex containing DNTTIP1, ZNF541, HDAC1 and HDAC2. Identified in a complex with KCTD19, HDAC1, HDAC2 and ZNF541.

The protein localises to the nucleus. Increases DNTT terminal deoxynucleotidyltransferase activity (in vitro). Also acts as a transcriptional regulator, binding to the consensus sequence 5'-GNTGCATG-3' following an AT-tract. Associates with RAB20 promoter and positively regulates its transcription. Binds DNA and nucleosomes; may recruit HDAC1 complexes to nucleosomes or naked DNA. This is Deoxynucleotidyltransferase terminal-interacting protein 1 (DNTTIP1) from Homo sapiens (Human).